A 136-amino-acid polypeptide reads, in one-letter code: Large ribosomal subunit protein uL16c (136 aa).

The protein belongs to the universal ribosomal protein uL16 family. In terms of assembly, part of the 50S ribosomal subunit.

Its subcellular location is the plastid. The protein localises to the chloroplast. This is Large ribosomal subunit protein uL16c from Guizotia abyssinica (Niger).